The primary structure comprises 357 residues: Arginine kinase (357 aa).

At Ala-2 the chain carries N-acetylalanine. The region spanning 9–91 (KLDEGFKKLE…FDPIIEDYHK (83 aa)) is the Phosphagen kinase N-terminal domain. An L-arginine-binding site is contributed by 64 to 68 (GVGVY). The Phosphagen kinase C-terminal domain occupies 119–356 (FVISTRVRCG…LELIKIEKEM (238 aa)). Residues 122–126 (STRVR) and His-185 each bind ATP. Glu-225 contributes to the L-arginine binding site. Arg-229 contributes to the ATP binding site. Cys-271 provides a ligand contact to L-arginine. ATP-binding positions include 280-284 (RASVH) and 309-314 (RGTRGE). Glu-314 is an L-arginine binding site.

This sequence belongs to the ATP:guanido phosphotransferase family.

It carries out the reaction L-arginine + ATP = N(omega)-phospho-L-arginine + ADP + H(+). The protein is Arginine kinase of Eriocheir sinensis (Chinese mitten crab).